The chain runs to 340 residues: Heat-inducible transcription repressor HrcA (340 aa).

It belongs to the HrcA family.

Negative regulator of class I heat shock genes (grpE-dnaK-dnaJ and groELS operons). Prevents heat-shock induction of these operons. This chain is Heat-inducible transcription repressor HrcA, found in Mycoplasmopsis synoviae (strain 53) (Mycoplasma synoviae).